A 490-amino-acid chain; its full sequence is Myocilin (490 aa).

Positions 1 to 18 (MPATQLLLLACLVWGLGA) are cleaved as a signal peptide. An N-linked (GlcNAc...) asparagine glycan is attached at Asn-43. Positions 52–169 (QAMSAIQDLQ…SQEVARLRRG (118 aa)) form a coiled coil. Residues 146–157 (REENEDLARRLD) are compositionally biased toward basic and acidic residues. The interval 146-188 (REENEDLARRLDSSSQEVARLRRGQCPQARGTPQDVPSGSREV) is disordered. Residues 230–489 (GCGELVWVGE…MVTYDLRLSE (260 aa)) form the Olfactomedin-like domain. Cys-231 and Cys-419 are oxidised to a cystine. Asp-366, Asn-414, Ala-415, Val-463, and Asp-464 together coordinate Ca(2+). The Microbody targeting signal motif lies at 488-490 (SEM).

Homodimer (via N-terminus). Can also form higher oligomers. Interacts with OLFM3, FN1, NRCAM, GLDN and NFASC. Interacts (via N-terminus) with MYL2. Interacts with SFRP1, FRZB, FZD7, FZD10, FZD1 and WIF1; regulates Wnt signaling. Interacts with SNTA1; regulates muscle hypertrophy. Interacts with ERBB2 and ERBB3; activates ERBB2-ERBB3 signaling pathway. Interacts with SNCG; affects its secretion and its aggregation. In terms of processing, palmitoylated. Post-translationally, undergoes a calcium-dependent proteolytic cleavage at Arg-212 by CAPN2 in the endoplasmic reticulum. The result is the production of two fragments, one of 35 kDa containing the C-terminal olfactomedin-like domain, and another of 20 kDa containing the N-terminal leucine zipper-like domain. Glycosylated. Expressed in optic nerve head, ciliary body and retina.

The protein resides in the secreted. It is found in the golgi apparatus. The protein localises to the cytoplasmic vesicle. Its subcellular location is the extracellular space. It localises to the extracellular matrix. The protein resides in the extracellular exosome. It is found in the mitochondrion. The protein localises to the mitochondrion intermembrane space. Its subcellular location is the mitochondrion inner membrane. It localises to the mitochondrion outer membrane. The protein resides in the rough endoplasmic reticulum. It is found in the cell projection. The protein localises to the cilium. Its subcellular location is the endoplasmic reticulum. Its function is as follows. Secreted glycoprotein regulating the activation of different signaling pathways in adjacent cells to control different processes including cell adhesion, cell-matrix adhesion, cytoskeleton organization and cell migration. Promotes substrate adhesion, spreading and formation of focal contacts. Negatively regulates cell-matrix adhesion and stress fiber assembly through Rho protein signal transduction. Modulates the organization of actin cytoskeleton by stimulating the formation of stress fibers through interactions with components of Wnt signaling pathways. Promotes cell migration through activation of PTK2 and the downstream phosphatidylinositol 3-kinase signaling. Plays a role in bone formation and promotes osteoblast differentiation in a dose-dependent manner through mitogen-activated protein kinase signaling. Mediates myelination in the peripheral nervous system through ERBB2/ERBB3 signaling. Plays a role as a regulator of muscle hypertrophy through the components of dystrophin-associated protein complex. Involved in positive regulation of mitochondrial depolarization. Plays a role in neurite outgrowth. May participate in the obstruction of fluid outflow in the trabecular meshwork. In Felis catus (Cat), this protein is Myocilin (MYOC).